A 99-amino-acid polypeptide reads, in one-letter code: Leydig cell tumor 10 kDa protein homolog (99 aa).

Positions M1–A37 are disordered. The segment covering G28 to A37 has biased composition (basic residues).

Belongs to the UPF0390 family.

Its function is as follows. May have a potential role in hypercalcemia of malignancy. The chain is Leydig cell tumor 10 kDa protein homolog from Pongo abelii (Sumatran orangutan).